A 469-amino-acid chain; its full sequence is ATP synthase subunit beta (469 aa).

156–163 (GGAGVGKT) contacts ATP.

It belongs to the ATPase alpha/beta chains family. In terms of assembly, F-type ATPases have 2 components, CF(1) - the catalytic core - and CF(0) - the membrane proton channel. CF(1) has five subunits: alpha(3), beta(3), gamma(1), delta(1), epsilon(1). CF(0) has three main subunits: a(1), b(2) and c(9-12). The alpha and beta chains form an alternating ring which encloses part of the gamma chain. CF(1) is attached to CF(0) by a central stalk formed by the gamma and epsilon chains, while a peripheral stalk is formed by the delta and b chains.

It is found in the cell membrane. It carries out the reaction ATP + H2O + 4 H(+)(in) = ADP + phosphate + 5 H(+)(out). Its function is as follows. Produces ATP from ADP in the presence of a proton gradient across the membrane. The catalytic sites are hosted primarily by the beta subunits. The chain is ATP synthase subunit beta from Lactococcus lactis subsp. lactis (strain IL1403) (Streptococcus lactis).